The following is a 200-amino-acid chain: Large ribosomal subunit protein uL4 (200 aa).

Residues 44–70 (AQKTRAEVTGSGKKPWRQKGTGRARSG) form a disordered region.

It belongs to the universal ribosomal protein uL4 family. In terms of assembly, part of the 50S ribosomal subunit.

One of the primary rRNA binding proteins, this protein initially binds near the 5'-end of the 23S rRNA. It is important during the early stages of 50S assembly. It makes multiple contacts with different domains of the 23S rRNA in the assembled 50S subunit and ribosome. Functionally, protein L4 is a both a transcriptional repressor and a translational repressor protein. It regulates transcription of the S10 operon (to which L4 belongs) by causing premature termination of transcription within the S10 leader. L4 controls the translation of the S10 operon by binding to its mRNA. Its function is as follows. This protein when expressed in E.coli represses both transcription and translation of the endogenous S10 operon. As the M.morganii S10 leader can be regulated in vitro by the E.coli L4 protein this strongly suggests the endogenous protein controls its own S10 operon in a similar fashion. In terms of biological role, forms part of the polypeptide exit tunnel. The polypeptide is Large ribosomal subunit protein uL4 (rplD) (Morganella morganii (Proteus morganii)).